The primary structure comprises 313 residues: Solute carrier family 25 member 36 (313 aa).

Solcar repeat units lie at residues Arg-4–Lys-110, Asp-118–Lys-205, and Ser-226–Leu-310. Transmembrane regions (helical) follow at residues Leu-7–Leu-27, Leu-41–Asn-57, Asn-113–Thr-133, Met-182–Ile-202, Phe-228–Pro-248, and Gln-293–Gly-313.

The protein belongs to the mitochondrial carrier (TC 2.A.29) family.

The protein resides in the mitochondrion inner membrane. Functionally, mitochondrial transporter that imports/exports pyrimidine nucleotides into and from mitochondria. Transports preferentially cytosine and uracil (deoxy)nucleoside mono-, di-, and triphosphates by uniport and antiport mechanism. In Gallus gallus (Chicken), this protein is Solute carrier family 25 member 36 (SLC25A36).